Reading from the N-terminus, the 401-residue chain is MEPRRAAPGVPGWGSREAAGSASAAELVYHLAGALGTELQDLARRFGPEAAAGLVPLVVRALELLEQAAVGPAPDSLQVSAQPAEQELRRLREENERLRRELRAGPQEERALLRQLKEVTDRQRDELRAHNRDLRQRGQETEALQEQLQRLLLVNAELRHKLAAMQTQLRAAQDRERERQQPGEAATPQAKERARGQAGRPGHQHGQEPEWATAGAGAPGNPEDPAEAAQQLGRPSEAGQCRFSREEFEQILQERNELKAKVFLLKEELAYFQRELLTDHRVPGLLLEAMKVAVRKQRKKIKAKMLGTPEEAESSEDEAGPWILLSDDKGDHPPPPESKIQSFFGLWYRGKAESSEDETSSPAPSKLGGEEEAQPQSPAPDPPCSALHEHLCLGASAAPEA.

One can recognise an RH1 domain in the interval 11–101; that stretch reads PGWGSREAAG…REENERLRRE (91 aa). The stretch at 75–181 forms a coiled coil; that stretch reads DSLQVSAQPA…AQDRERERQQ (107 aa). Disordered regions lie at residues 167-239 and 304-388; these read TQLR…SEAG and KMLG…SALH. The span at 172–181 shows a compositional bias: basic and acidic residues; the sequence is AQDRERERQQ. Residues 240 to 316 enclose the RH2 domain; that stretch reads QCRFSREEFE…GTPEEAESSE (77 aa). Residues 272–333 form a necessary for interaction with RAB7A and RAB34, lysosomal distribution and morphology region; it reads FQRELLTDHR…LLSDDKGDHP (62 aa). Residue threonine 308 is modified to Phosphothreonine. Positions 310 to 319 are enriched in acidic residues; that stretch reads EEAESSEDEA. Residues serine 314 and serine 315 each carry the phosphoserine modification.

Homodimer. Interacts with RAB7A. Interacts with RAB34. Identified in a complex with MREG and DCTN1; interacts directly with MREG. Interacts with CLN3. Interacts with FLCN; the interaction is direct and promotes association between RILP and RAB34. As to expression, ubiquitous. Strongly expressed in fetal heart, heart, stomach, spleen, adrenal gland, thyroid gland, salivary gland, fetal liver, liver and lung. Poorly expressed in brain.

It is found in the late endosome membrane. The protein resides in the lysosome membrane. Its subcellular location is the cytoplasmic vesicle. It localises to the phagosome membrane. Rab effector playing a role in late endocytic transport to degradative compartments. Involved in the regulation of lysosomal morphology and distribution. Induces recruitment of dynein-dynactin motor complexes to Rab7A-containing late endosome and lysosome compartments. Promotes centripetal migration of phagosomes and the fusion of phagosomes with the late endosomes and lysosomes. This Homo sapiens (Human) protein is Rab-interacting lysosomal protein (RILP).